The following is a 275-amino-acid chain: Dermonecrotic toxin SpeSicTox-betaIIA2iii (275 aa).

His5 is an active-site residue. Residues Glu25 and Asp27 each contribute to the Mg(2+) site. The active-site Nucleophile is the His41. Cystine bridges form between Cys45-Cys51 and Cys47-Cys190. Asp85 is a binding site for Mg(2+).

Belongs to the arthropod phospholipase D family. Class II subfamily. It depends on Mg(2+) as a cofactor. As to expression, expressed by the venom gland.

The protein resides in the secreted. The catalysed reaction is an N-(acyl)-sphingosylphosphocholine = an N-(acyl)-sphingosyl-1,3-cyclic phosphate + choline. It carries out the reaction an N-(acyl)-sphingosylphosphoethanolamine = an N-(acyl)-sphingosyl-1,3-cyclic phosphate + ethanolamine. The enzyme catalyses a 1-acyl-sn-glycero-3-phosphocholine = a 1-acyl-sn-glycero-2,3-cyclic phosphate + choline. It catalyses the reaction a 1-acyl-sn-glycero-3-phosphoethanolamine = a 1-acyl-sn-glycero-2,3-cyclic phosphate + ethanolamine. Its function is as follows. Dermonecrotic toxins cleave the phosphodiester linkage between the phosphate and headgroup of certain phospholipids (sphingolipid and lysolipid substrates), forming an alcohol (often choline) and a cyclic phosphate. This toxin acts on sphingomyelin (SM). It may also act on ceramide phosphoethanolamine (CPE), lysophosphatidylcholine (LPC) and lysophosphatidylethanolamine (LPE), but not on lysophosphatidylserine (LPS), and lysophosphatidylglycerol (LPG). It acts by transphosphatidylation, releasing exclusively cyclic phosphate products as second products. Induces dermonecrosis, hemolysis, increased vascular permeability, edema, inflammatory response, and platelet aggregation. This chain is Dermonecrotic toxin SpeSicTox-betaIIA2iii, found in Sicarius peruensis (Six-eyed sand spider).